The primary structure comprises 664 residues: Intraflagellar transport protein 70B (664 aa).

7 TPR repeats span residues 11 to 44 (DGEFTAVVYRLIRDSRYSEAVQLLSAELQRSSRS), 45 to 78 (RAGLSLLAYCYYRLQEFELAAECYEQLSQMHPEL), 153 to 186 (YDGQINLGCLLYKEGHYEAACSKFLAALQASGYQ), 188 to 220 (DLSYNLALAYYSSRQYAPALKHIADIIERGIRQ), 385 to 418 (LTEQLRKLTIQVQDSRHSRDDESAKKAVNEYDET), 423 to 456 (IPVLMAQAKIYWNFENYPMVEKIFRKSVEFCNDH), and 458 to 491 (VWKLNVAHVLFMQENKYKEAIGFYEPIVKKNYDN). Positions 507–534 (YIMTSQNEEAEELMRKIEKEEEQLSYGD) form a coiled coil. A TPR 8 repeat occupies 543–576 (CIVNLVIGTLYCAKGNYDFGISRVIKSLEPYHKK).

The protein belongs to the TTC30/dfy-1/fleer family. As to quaternary structure, interacts with the IFT B complex components IFT27, IFT46, IFT74, IFT52, IFT57, IFT80, IFT81 and IFT88. Interacts with KIF17.

It localises to the cell projection. Its subcellular location is the cilium. Its function is as follows. Required for polyglutamylation of axonemal tubulin. Plays a role in anterograde intraflagellar transport (IFT), the process by which cilia precursors are transported from the base of the cilium to the site of their incorporation at the tip. The sequence is that of Intraflagellar transport protein 70B (Ift70b) from Mus musculus (Mouse).